A 70-amino-acid chain; its full sequence is Peptide BmKn2 (70 aa).

The N-terminal stretch at 1 to 23 (MKSQTFFLLFLVVLLLAISQSEA) is a signal peptide. Phenylalanine 36 carries the phenylalanine amide modification. The propeptide occupies 40–70 (SMRDMDTMKYLYDPSLSAADLKTLQKLMENY).

This sequence belongs to the non-disulfide-bridged peptide (NDBP) superfamily. Short antimicrobial peptide (group 4) family. As to expression, expressed by the venom gland.

The protein resides in the secreted. Its subcellular location is the target cell membrane. Its function is as follows. Antimicrobial peptide with potent activity against bacteria. Has strong antibacterial activity against Gram-positive bacteria S.aureus, M.luteus, B.subtilis, and Gram-negative bacteria E.coli, P.aeruginosa and N.gonorrhoeae. Also shows low activity against HIV-1 PV. The protein is Peptide BmKn2 of Olivierus martensii (Manchurian scorpion).